The following is a 108-amino-acid chain: Replication restart protein PriB (108 aa).

One can recognise an SSB domain in the interval 11 to 108; that stretch reads INRNQVIISG…VLHVRDTRII (98 aa).

Belongs to the PriB family. In terms of assembly, homodimer. Interacts with PriA and DnaT. Component of the replication restart primosome. Primosome assembly occurs via a 'hand-off' mechanism. PriA binds to replication forks, subsequently PriB then DnaT bind; DnaT then displaces ssDNA to generate the helicase loading substrate.

Its function is as follows. Involved in the restart of stalled replication forks, which reloads the replicative helicase on sites other than the origin of replication; the PriA-PriB pathway is the major replication restart pathway. During primosome assembly it facilitates complex formation between PriA and DnaT on DNA; stabilizes PriA on DNA. Stimulates the DNA unwinding activity of PriA helicase. This chain is Replication restart protein PriB, found in Nitrosomonas europaea (strain ATCC 19718 / CIP 103999 / KCTC 2705 / NBRC 14298).